The primary structure comprises 561 residues: Putative transport protein YbjL (561 aa).

The next 5 helical transmembrane spans lie at 8-28, 32-52, 66-86, 94-114, and 158-178; these read LLNG…LCLG, LGSI…LLGQ, FMLF…SIFF, MLAL…GKLF, and NLSL…IVGA. 2 RCK C-terminal domains span residues 200 to 288 and 292 to 373; these read RGLD…SFRN and VFDR…RIGF. The next 5 helical transmembrane spans lie at 383-403, 406-426, 451-471, 475-495, and 540-560; these read LLAF…TFQF, FSFG…LGFM, VFMA…LGAI, MLIA…LFGA, and AIAN…WPGL.

Belongs to the AAE transporter (TC 2.A.81) family. YbjL subfamily.

The protein localises to the cell membrane. The polypeptide is Putative transport protein YbjL (Shigella boydii serotype 4 (strain Sb227)).